Consider the following 132-residue polypeptide: Tyrosine phosphatase-like protein N2 (132 aa).

The Tyrosine-protein phosphatase domain occupies Met-1 to Phe-132.

It belongs to the protein-tyrosine phosphatase family.

This Microplitis demolitor (Parasitoid wasp) protein is Tyrosine phosphatase-like protein N2 (N4).